The sequence spans 389 residues: MVSVSGIRKVQRAEGPATVLAIGTANPPNCVDQSTYADYYFRVTNGEHMTDLKKKFQRICERTQIKNRHMYLTEEILKENPNMCAYKAPSLDAREDMMIREVPRVGKEAATKAIKEWGQPMSKITHLIFCTTSGVALPGVDYELIVLLGLDPSVKRYMMYHQGCFAGGTVLRLAKDLAENNKDARVLIVCSENTAVTFRGPNETDMDSLVGQALFADGAAAIIIGSDPVPEVENPIFEIVSTDQQLVPNSHGAIGGLLREVGLTFYLNKSVPDIISQNINGALSKAFDPLGISDYNSIFWIAHLGGRAILDQVEQKVNLKPEKMKATRDVLSNYGNMSSACVFFIMDLMRKKSLETGLKTTGEGLDWGVLFGFGPGLTIETVVLRSMAI.

Position 55–58 (55–58 (KFQR)) interacts with substrate. Cys164 is an active-site residue. Residues Leu267 and 305–307 (GGR) contribute to the substrate site.

This sequence belongs to the thiolase-like superfamily. Chalcone/stilbene synthases family. As to quaternary structure, homodimer.

It is found in the cytoplasm. The catalysed reaction is 4-coumaroyl-CoA + 3 malonyl-CoA + 3 H(+) = trans-resveratrol + 4 CO2 + 4 CoA. Its pathway is phytoalexin biosynthesis; 3,4',5-trihydroxystilbene biosynthesis; 3,4',5-trihydroxystilbene from trans-4-coumarate: step 2/2. This chain is Stilbene synthase 1, found in Arachis hypogaea (Peanut).